The primary structure comprises 115 residues: UPF0597 protein NTHI1023 (115 aa).

It belongs to the UPF0597 family.

The sequence is that of UPF0597 protein NTHI1023 from Haemophilus influenzae (strain 86-028NP).